A 358-amino-acid chain; its full sequence is Thiol protease aleurain (358 aa).

A signal peptide spans 1 to 21 (MSAKTILSSVVLVVLVAASAA). The segment at 22–42 (ANIGFDESNPIRMVSDGLREV) is interaction with VSR1. Positions 22–140 (ANIGFDESNP…KGSHKVTEAA (119 aa)) are cleaved as a propeptide — activation peptide. N-linked (GlcNAc...) asparagine glycosylation occurs at asparagine 125. 2 disulfides stabilise this stretch: cysteine 162-cysteine 205 and cysteine 196-cysteine 238. Cysteine 165 is an active-site residue. Asparagine 254 carries an N-linked (GlcNAc...) asparagine glycan. Residues cysteine 296 and cysteine 346 are joined by a disulfide bond. Catalysis depends on residues histidine 305 and asparagine 325.

The protein belongs to the peptidase C1 family. As to quaternary structure, interacts with VSR1/BP80B. In terms of tissue distribution, expressed in leaves (at protein level).

It localises to the vacuole. It catalyses the reaction Hydrolysis of proteins, acting as an aminopeptidase (notably, cleaving Arg-|-Xaa bonds) as well as an endopeptidase.. Functionally, may play a role in proteolysis leading to mobilization of nitrogen during senescence and starvation. This is Thiol protease aleurain from Arabidopsis thaliana (Mouse-ear cress).